The chain runs to 162 residues: MRISKPHLRITSIQCYVCLLLNTHFLTEAGIRVFILGCISAGIPKTEANWEDVRKDLQKIENLIQSLHMDATLYTESDVHPRCKVTTMNCFLLELEVISHESRDGDIEETVKNLILLANSSLSSNGNITESGCKVCEELEEKNITEFLESFKHIVQMFINPP.

The N-terminal stretch at 1 to 29 (MRISKPHLRITSIQCYVCLLLNTHFLTEA) is a signal peptide. A propeptide spanning residues 30-48 (GIRVFILGCISAGIPKTEA) is cleaved from the precursor. 2 disulfide bridges follow: Cys83–Cys133 and Cys90–Cys136. N-linked (GlcNAc...) asparagine glycans are attached at residues Asn119, Asn127, and Asn143.

The protein belongs to the IL-15/IL-21 family.

The protein localises to the secreted. Functionally, cytokine that plays a major role in the development of inflammatory and protective immune responses to microbial invaders and parasites by modulating immune cells of both the innate and adaptive immune systems. Stimulates the proliferation of natural killer cells, T-cells and B-cells and promotes the secretion of several cytokines. In monocytes, induces the production of IL8 and monocyte chemotactic protein 1/CCL2, two chemokines that attract neutrophils and monocytes respectively to sites of infection. Unlike most cytokines, which are secreted in soluble form, IL15 is expressed in association with its high affinity IL15RA on the surface of IL15-producing cells and delivers signals to target cells that express IL2RB and IL2RG receptor subunits. Binding to its receptor triggers the phosphorylation of JAK1 and JAK3 and the recruitment and subsequent phosphorylation of signal transducer and activator of transcription-3/STAT3 and STAT5. In mast cells, induces the rapid tyrosine phosphorylation of STAT6 and thereby controls mast cell survival and release of cytokines such as IL4. This is Interleukin-15 (IL15) from Marmota himalayana (Himalayan marmot).